Reading from the N-terminus, the 66-residue chain is Putative antitoxin APE_0279a.1 (66 aa).

This sequence belongs to the UPF0165 family.

Its function is as follows. Possibly the antitoxin component of a type II toxin-antitoxin (TA) system. The polypeptide is Putative antitoxin APE_0279a.1 (Aeropyrum pernix (strain ATCC 700893 / DSM 11879 / JCM 9820 / NBRC 100138 / K1)).